Here is a 315-residue protein sequence, read N- to C-terminus: Homoserine kinase (315 aa).

97 to 107 contributes to the ATP binding site; it reads PPARGLGSSAT.

Belongs to the GHMP kinase family. Homoserine kinase subfamily.

The protein localises to the cytoplasm. It carries out the reaction L-homoserine + ATP = O-phospho-L-homoserine + ADP + H(+). Its pathway is amino-acid biosynthesis; L-threonine biosynthesis; L-threonine from L-aspartate: step 4/5. Catalyzes the ATP-dependent phosphorylation of L-homoserine to L-homoserine phosphate. In Prochlorococcus marinus (strain MIT 9515), this protein is Homoserine kinase.